Consider the following 69-residue polypeptide: MAILHVDEIRDMTAAEREVELEQLETELLNEKAVLAAGGAPENPGRIGELKRTIARVKTIQREEGDFDE.

The protein belongs to the universal ribosomal protein uL29 family.

This chain is Large ribosomal subunit protein uL29, found in Natronomonas pharaonis (strain ATCC 35678 / DSM 2160 / CIP 103997 / JCM 8858 / NBRC 14720 / NCIMB 2260 / Gabara) (Halobacterium pharaonis).